Here is a 354-residue protein sequence, read N- to C-terminus: Uroporphyrinogen decarboxylase (354 aa).

Residues 27 to 31 (RQAGR), Asp-77, Tyr-154, Thr-209, and His-327 contribute to the substrate site.

This sequence belongs to the uroporphyrinogen decarboxylase family. In terms of assembly, homodimer.

The protein localises to the cytoplasm. The enzyme catalyses uroporphyrinogen III + 4 H(+) = coproporphyrinogen III + 4 CO2. It functions in the pathway porphyrin-containing compound metabolism; protoporphyrin-IX biosynthesis; coproporphyrinogen-III from 5-aminolevulinate: step 4/4. Catalyzes the decarboxylation of four acetate groups of uroporphyrinogen-III to yield coproporphyrinogen-III. In Salmonella agona (strain SL483), this protein is Uroporphyrinogen decarboxylase.